Consider the following 453-residue polypeptide: DDB1- and CUL4-associated factor 12 (453 aa).

Positions 1–12 (MARKVVSRKRKA) are enriched in basic residues. Residues 1 to 34 (MARKVVSRKRKAPASPGAGSDAQGPQFGWDHSLH) are disordered. Positions 1–38 (MARKVVSRKRKAPASPGAGSDAQGPQFGWDHSLHKRKR) are required for nuclear location and interaction with MOV10. S15 carries the phosphoserine modification. WD repeat units lie at residues 81-122 (EREF…TSQI), 123-175 (TKIP…TLDP), 176-242 (VCVG…ALKD), 243-286 (IPKE…NTLS), 287-331 (KLLS…SYNV), and 332-366 (KSVC…LFYD).

The protein belongs to the WD repeat DCAF12 family. In terms of assembly, component of the DCX(DCAF12) E3 ubiquitin ligase complex, at least composed of CUL4 (CUL4A or CUL4B), DDB1, DCAF12 and RBX1. As to expression, highly expressed in lung cancer tissues and some cancer cell lines. Restricted expression in normal testis.

The protein resides in the cytoplasm. Its subcellular location is the cytoskeleton. The protein localises to the microtubule organizing center. It is found in the centrosome. It localises to the nucleus. It functions in the pathway protein modification; protein ubiquitination. Its function is as follows. Substrate-recognition component of a DCX (DDB1-CUL4-X-box) E3 ubiquitin-protein ligase complex of the DesCEND (destruction via C-end degrons) pathway, which recognizes a C-degron located at the extreme C terminus of target proteins, leading to their ubiquitination and degradation. The C-degron recognized by the DesCEND pathway is usually a motif of less than ten residues and can be present in full-length proteins, truncated proteins or proteolytically cleaved forms. The DCX(DCAF12) complex specifically recognizes proteins with a diglutamate (Glu-Glu) at the C-terminus, such as MAGEA3, MAGEA6 and CCT5, leading to their ubiquitination and degradation. Ubiquitination of MAGEA3, MAGEA6 by DCX(DCAF12) complex is required for starvation-induced autophagy. Also directly recognizes the C-terminal glutamate-leucine (Glu-Leu) degron as an alternative degron in proteins such as MOV10, leading to their ubiquitination and degradation. Controls the protein level of MOV10 during spermatogenesis and in T cells, especially after their activation. This Homo sapiens (Human) protein is DDB1- and CUL4-associated factor 12.